A 122-amino-acid chain; its full sequence is Small ribosomal subunit protein bS16 (122 aa).

The segment at 81–122 (GLMKRDAKNNPKKGEPGEKAKERAKERAEKAAAGSTEDAAAE) is disordered. Residues 83–110 (MKRDAKNNPKKGEPGEKAKERAKERAEK) are compositionally biased toward basic and acidic residues. Positions 111-122 (AAAGSTEDAAAE) are enriched in low complexity.

This sequence belongs to the bacterial ribosomal protein bS16 family.

This chain is Small ribosomal subunit protein bS16, found in Xanthobacter autotrophicus (strain ATCC BAA-1158 / Py2).